Reading from the N-terminus, the 136-residue chain is uncharacterized protein (136 aa).

Positions methionine 1 to serine 35 are cleaved as a signal peptide.

This is an uncharacterized protein from Saccharomyces cerevisiae (strain ATCC 204508 / S288c) (Baker's yeast).